The sequence spans 340 residues: Zinc finger protein 367 (340 aa).

Residues Leu96–Ala140 form a disordered region. Positions Gly101–Gly114 are enriched in low complexity. Basic and acidic residues predominate over residues Gly127–Ala140. C2H2-type zinc fingers lie at residues Ile157–His179 and Tyr185–His209. Residues Lys280–Gln317 are disordered. Residues Gln299–Asn332 adopt a coiled-coil conformation. Ser300 is modified (phosphoserine). Over residues Lys307–Gln317 the composition is skewed to basic and acidic residues.

This sequence belongs to the krueppel C2H2-type zinc-finger protein family.

Its subcellular location is the nucleus. Functionally, transcriptional activator. May be involved in transcriptional activation of erythroid genes. This is Zinc finger protein 367 (Znf367) from Rattus norvegicus (Rat).